The primary structure comprises 225 residues: PKHD-type hydroxylase HEAR3399 (225 aa).

Residues 77–177 (RYMPPLFNRY…RVCSFFWLQS (101 aa)) form the Fe2OG dioxygenase domain. 3 residues coordinate Fe cation: His95, Asp97, and His158. Arg168 lines the 2-oxoglutarate pocket.

Fe(2+) serves as cofactor. The cofactor is L-ascorbate.

In Herminiimonas arsenicoxydans, this protein is PKHD-type hydroxylase HEAR3399.